Reading from the N-terminus, the 98-residue chain is Putative protein adenylyltransferase MJ1217 (98 aa).

Positions 31 to 45 match the GSX(10)DXD motif motif; sequence GSYAREEQKETSDID. Mg(2+)-binding residues include Asp-43, Asp-45, and Asp-75.

It belongs to the MntA antitoxin family. In terms of assembly, probably forms a complex with cognate toxin MJ1216. The cofactor is Mg(2+).

It carries out the reaction L-tyrosyl-[protein] + ATP = O-(5'-adenylyl)-L-tyrosyl-[protein] + diphosphate. The enzyme catalyses O-(5'-adenylyl)-L-tyrosyl-[protein] + ATP = O-[5'-(adenylyl-(5'-&gt;3')-adenylyl)]-L-tyrosyl-[protein] + diphosphate. Functionally, probable antitoxin component of a putative type VII toxin-antitoxin (TA) system. Neutralizes cognate toxic MJ1216 by di-AMPylation. In Methanocaldococcus jannaschii (strain ATCC 43067 / DSM 2661 / JAL-1 / JCM 10045 / NBRC 100440) (Methanococcus jannaschii), this protein is Putative protein adenylyltransferase MJ1217.